The primary structure comprises 159 residues: MINYLKSFFLYEIVRGMVLTLKYFFKPKVTINYPYEKSPISPRFKGEHALRRYENGEERCIACKLCEAICPAQAIVIEADEREDGSRRTTRYDIDMTKCIYCGLCQEACPVDAIVEGPNFEFASLTHTALIYDKERLLQNGDRWEQALASKLHKDYEYR.

2 consecutive 4Fe-4S ferredoxin-type domains span residues 51-80 (RRYENGEERCIACKLCEAICPAQAIVIEAD) and 90-119 (TRYDIDMTKCIYCGLCQEACPVDAIVEGPN). The [4Fe-4S] cluster site is built by C60, C63, C66, C70, C99, C102, C105, and C109.

The protein belongs to the complex I 23 kDa subunit family. NDH-1 is composed of 14 different subunits. Subunits NuoA, H, J, K, L, M, N constitute the membrane sector of the complex. Requires [4Fe-4S] cluster as cofactor.

The protein localises to the cell inner membrane. It carries out the reaction a quinone + NADH + 5 H(+)(in) = a quinol + NAD(+) + 4 H(+)(out). Its function is as follows. NDH-1 shuttles electrons from NADH, via FMN and iron-sulfur (Fe-S) centers, to quinones in the respiratory chain. The immediate electron acceptor for the enzyme in this species is believed to be ubiquinone. Couples the redox reaction to proton translocation (for every two electrons transferred, four hydrogen ions are translocated across the cytoplasmic membrane), and thus conserves the redox energy in a proton gradient. This chain is NADH-quinone oxidoreductase subunit I, found in Rickettsia conorii (strain ATCC VR-613 / Malish 7).